We begin with the raw amino-acid sequence, 213 residues long: MKAFTQHHGLVAPLDRANVDTDQIIPKQFLKSIKRTGFGPNLFDEWRYLDVGQPYQDNSKRPLNPDFVLNHERYQGASVLLARENFGCGSSREHAPWALEEYGFCAIIAPSYADIFFNNSFKNGLLPIILSEEDVDQLFKQVEASPGYQLSIDLQAQTVTRPDGKVLSFEIDAFRKHCLLNGLDDIGLTLMDAEAIAGFESRHRASQPWLFRD.

The protein belongs to the LeuD family. LeuD type 1 subfamily. In terms of assembly, heterodimer of LeuC and LeuD.

The catalysed reaction is (2R,3S)-3-isopropylmalate = (2S)-2-isopropylmalate. The protein operates within amino-acid biosynthesis; L-leucine biosynthesis; L-leucine from 3-methyl-2-oxobutanoate: step 2/4. Catalyzes the isomerization between 2-isopropylmalate and 3-isopropylmalate, via the formation of 2-isopropylmaleate. This is 3-isopropylmalate dehydratase small subunit from Pseudomonas syringae pv. syringae (strain B728a).